The following is an 855-amino-acid chain: DNA mismatch repair protein MutS (855 aa).

Residue 616–623 (GPNMGGKS) participates in ATP binding.

It belongs to the DNA mismatch repair MutS family.

Its function is as follows. This protein is involved in the repair of mismatches in DNA. It is possible that it carries out the mismatch recognition step. This protein has a weak ATPase activity. The polypeptide is DNA mismatch repair protein MutS (Salmonella schwarzengrund (strain CVM19633)).